Reading from the N-terminus, the 1505-residue chain is Phosphatidylinositol 3-kinase C2 domain-containing subunit gamma (1505 aa).

A disordered region spans residues 1-32 (MAYNWQTEPNRAEPQEGGHDHQQCHHADQHLS). The span at 10 to 31 (NRAEPQEGGHDHQQCHHADQHL) shows a compositional bias: basic and acidic residues. One can recognise a PI3K-RBD domain in the interval 278-370 (PSRLFADTQF…IQLHLQRSRD (93 aa)). The region spanning 540-688 (LHSHLSFTVC…TPLTLQIDFP (149 aa)) is the C2 PI3K-type domain. The 177-residue stretch at 703-879 (RTDHQEPPRE…QELLAALQFC (177 aa)) folds into the PIK helical domain. A PI3K/PI4K catalytic domain is found at 948 to 1226 (DRDACSYFTS…KIKQSLECFP (279 aa)). A G-loop region spans residues 954–960 (YFTSNAL). The interval 1090 to 1098 (GVCDRHNDN) is catalytic loop. The interval 1109–1135 (HIDFGKFLGHAQTFGGIKRDRAPFIFT) is activation loop. The PX domain maps to 1259 to 1371 (LNKTRTIQRV…SFFLSEHIQQ (113 aa)). Residues 1384–1505 (HSPDKSPQVQ…KWYPLGNSII (122 aa)) form the C2 domain.

This sequence belongs to the PI3/PI4-kinase family. In terms of tissue distribution, predominantly expressed in normal liver. High levels also found in regenerating liver. Very low levels found in heart and testis.

It is found in the membrane. The catalysed reaction is a 1,2-diacyl-sn-glycero-3-phospho-(1D-myo-inositol) + ATP = a 1,2-diacyl-sn-glycero-3-phospho-(1D-myo-inositol-3-phosphate) + ADP + H(+). It catalyses the reaction a 1,2-diacyl-sn-glycero-3-phospho-(1D-myo-inositol 4-phosphate) + ATP = a 1,2-diacyl-sn-glycero-3-phospho-(1D-myo-inositol-3,4-bisphosphate) + ADP + H(+). Functionally, generates phosphatidylinositol 3-phosphate (PtdIns3P) and phosphatidylinositol 3,4-bisphosphate (PtdIns(3,4)P2) that act as second messengers. May play a role in SDF1A-stimulated chemotaxis. The sequence is that of Phosphatidylinositol 3-kinase C2 domain-containing subunit gamma (Pik3c2g) from Rattus norvegicus (Rat).